A 165-amino-acid polypeptide reads, in one-letter code: MTLEEFSAAEQKTERMDTVGDALEEVLSKARSQRTITVGVYEAAKLLNVDPDNVVLCLLAADEDDDRDVALQIHFTLIQAFCCENDINILRVSNPGRLAELLLLESDAGPAESGGASQPPDLHCVLVTNPHSSQWKDPALSQLICFCRESRYMDQWVPVINLPER.

Thr-2 is subject to Phosphothreonine.

It belongs to the GADD45 family. In terms of assembly, interacts with AURKA, PCNA, GADD45GIP1 and MAPK14.

It localises to the nucleus. Functionally, might affect PCNA interaction with some CDK (cell division protein kinase) complexes; stimulates DNA excision repair in vitro and inhibits entry of cells into S phase. In T-cells, functions as a regulator of p38 MAPKs by inhibiting p88 phosphorylation and activity. The polypeptide is Growth arrest and DNA damage-inducible protein GADD45 alpha (GADD45A) (Cricetulus griseus (Chinese hamster)).